The primary structure comprises 173 residues: NADH-ubiquinone oxidoreductase chain 6 (173 aa).

5 helical membrane-spanning segments follow: residues 1-21 (MTYF…AVAS), 27-47 (YGVV…LSLG), 48-68 (VSFV…VVFV), 91-111 (GVSF…IGCL), and 139-159 (CGVG…FVVL).

Belongs to the complex I subunit 6 family.

The protein localises to the mitochondrion membrane. The catalysed reaction is a ubiquinone + NADH + 5 H(+)(in) = a ubiquinol + NAD(+) + 4 H(+)(out). In terms of biological role, core subunit of the mitochondrial membrane respiratory chain NADH dehydrogenase (Complex I) that is believed to belong to the minimal assembly required for catalysis. Complex I functions in the transfer of electrons from NADH to the respiratory chain. The immediate electron acceptor for the enzyme is believed to be ubiquinone. This Fratercula cirrhata (Tufted puffin) protein is NADH-ubiquinone oxidoreductase chain 6 (MT-ND6).